Here is a 334-residue protein sequence, read N- to C-terminus: Rhomboid-like protein 14, mitochondrial (334 aa).

A mitochondrion-targeting transit peptide spans 1 to 87 (MENFGEGRRS…RLFLSAFYHV (87 aa)). 4 helical membrane passes run 114–134 (EFAS…LLLA), 146–166 (AYYN…KVVL), 176–196 (VYGI…LVQM), and 197–217 (FVPN…IIYL). Serine 156 acts as the Nucleophile in catalysis. Histidine 206 acts as the Charge relay system in catalysis. The segment at 273–302 (GPGIWRCQSCTYDNSGWLSACEMCGSGRAR) adopts a RanBP2-type zinc-finger fold.

This sequence belongs to the peptidase S54 family.

Its subcellular location is the mitochondrion membrane. Probable rhomboid-type serine protease that catalyzes intramembrane proteolysis. May function in the heat-shock response pathway. The chain is Rhomboid-like protein 14, mitochondrial from Arabidopsis thaliana (Mouse-ear cress).